A 710-amino-acid polypeptide reads, in one-letter code: Ephexin-1 (710 aa).

A compositionally biased stretch (basic and acidic residues) spans 1-20 (METKNSEDWGKPQRKSESSS). The interval 1-146 (METKNSEDWG…TPEECPALTD (146 aa)) is disordered. The interval 1-272 (METKNSEDWG…VLDILQPEEI (272 aa)) is regulatory region; modulates activity toward RHOA, RAC1 and CDC42. Residues 123–137 (QEASESSSTPGNGTT) show a composition bias toward polar residues. A Phosphotyrosine modification is found at Tyr177. Residues 192-234 (RRQQDAEIQGNSDGSQVGEDAGEEEEEEEEGEEEELASPPERR) form a disordered region. Residues 211–227 (DAGEEEEEEEEGEEEEL) are compositionally biased toward acidic residues. In terms of domain architecture, DH spans 273 to 457 (RLQEAMFELV…EMVVKACNEG (185 aa)). Residues 489–601 (WLLKQGELQQ…WMTSLAPNRR (113 aa)) enclose the PH domain. One can recognise an SH3 domain in the interval 612–673 (LDCPQVQCVH…PSSMTEEILN (62 aa)). Basic and acidic residues predominate over residues 688 to 699 (HKMEDPQRSQNK). Residues 688-710 (HKMEDPQRSQNKDRRKLGSRNRQ) form a disordered region. A compositionally biased stretch (basic residues) spans 700 to 710 (DRRKLGSRNRQ).

In terms of assembly, interacts with CDK5R1 and EPHA4; activated by EPHA4 through the CDK5 kinase. Post-translationally, src-dependent phosphorylation at Tyr-177 upon EPHA4 activation increases the guanine exchange factor activity toward RHOA. Phosphorylation by CDK5 upon EPHA4 activation by EFNA1 may regulate dendritic spine morphogenesis. Highly expressed in brain and to a lower extent in eye.

The protein localises to the cytoplasm. The protein resides in the membrane. Its subcellular location is the cell projection. It is found in the growth cone. Acts as a guanine nucleotide exchange factor (GEF) which differentially activates the GTPases RHOA, RAC1 and CDC42. Plays a role in axon guidance regulating ephrin-induced growth cone collapse and dendritic spine morphogenesis. Upon activation by ephrin through EPHA4, the GEF activity switches toward RHOA resulting in its activation. Activated RHOA promotes cone retraction at the expense of RAC1- and CDC42-stimulated growth cone extension. The protein is Ephexin-1 (Ngef) of Mus musculus (Mouse).